The following is a 1051-amino-acid chain: SWI/SNF-related matrix-associated actin-dependent regulator of chromatin subfamily A member 5 (1051 aa).

Residues 1–15 (MSSAVEPPPPPPPES) show a composition bias toward pro residues. The disordered stretch occupies residues 1-81 (MSSAVEPPPP…IQEPDPTYEE (81 aa)). Ser2 bears the N-acetylserine mark. The segment covering 24 to 38 (GAGGSSSGNKGGPEG) has biased composition (gly residues). Positions 39–53 (GAAPAAPCAAGSGPA) are enriched in low complexity. Thr55 bears the Phosphothreonine mark. Ser65 carries the phosphoserine modification. The span at 68–81 (KQKEIQEPDPTYEE) shows a compositional bias: basic and acidic residues. A Glycyl lysine isopeptide (Lys-Gly) (interchain with G-Cter in SUMO2) cross-link involves residue Lys82. At Thr112 the chain carries Phosphothreonine. 3 positions are modified to phosphoserine: Ser115, Ser136, and Ser170. The Helicase ATP-binding domain occupies 191–356 (ISLYENGING…WSLLNFLLPD (166 aa)). An ATP-binding site is contributed by 204–211 (DEMGLGKT). The DEAH box signature appears at 307–310 (DEAH). Lys439 carries the N6-acetyllysine modification. Residues 486-637 (VLDKLLPKLK…SIVIQQGRLV (152 aa)) form the Helicase C-terminal domain. Residues Lys643, Lys646, Lys693, Lys721, and Lys734 each participate in a glycyl lysine isopeptide (Lys-Gly) (interchain with G-Cter in SUMO2) cross-link. Phosphoserine is present on Ser754. SANT domains follow at residues 839–891 (QGFT…ERCN) and 942–1006 (KGKN…LITL). A Glycyl lysine isopeptide (Lys-Gly) (interchain with G-Cter in SUMO2) cross-link involves residue Lys965. The segment at 1014-1051 (LEEKEKAEKKKRGPKPSTQKRKMDGAPDGRGRKKKLKL) is disordered. The span at 1022 to 1033 (KKKRGPKPSTQK) shows a compositional bias: basic residues. The span at 1034–1043 (RKMDGAPDGR) shows a compositional bias: basic and acidic residues.

Belongs to the SNF2/RAD54 helicase family. ISWI subfamily. Component of the ACF-5 ISWI chromatin-remodeling complex (also called the ACF/WCRF complex) at least composed of SMARCA5/SNF2H and BAZ1A/ACF1, which regulates the spacing of histone octamers on the DNA template to facilitate access to DNA. Within the complex interacts with BAZ1A/ACF1; the interaction is direct and is required to slide nucleosomes from end to center positions on a DNA template in an ATP-dependent manner. Component of the CHRAC ISWI chromatin-remodeling complex at least composed of SMARCA5/SNF2H, BAZ1A/ACF1, CHRAC1 and POLE3; the complex preferentially binds DNA through the CHRAC1-POLE3 heterodimer and possesses ATP-dependent nucleosome-remodeling activity. Within the complex interacts with BAZ1A/ACF1; the interaction is direct and promotes the interaction with the POLE3-CHRAC1 heterodimer. Within the complex interacts with the POLE3-CHRAC1 heterodimer; the interaction is direct and enhances nucleosome sliding activity by the SMARCA5/SNF2H and BAZ1A/ACF1 interaction. Neither POLE3 nor CHRAC1 enhances nucleosome sliding activity of the ACF-5 ISWI chromatin remodeling complex. Component of the WICH-5 ISWI chromatin-remodeling complex (also called the WICH complex) at least composed of SMARCA5/SNF2H and BAZ1B/WSTF, which regulates the spacing of histone octamers on the DNA template to facilitate access to DNA. Within the complex interacts with BAZ1B/WSTF. Component of the NoRC-5 ISWI chromatin-remodeling complex (also called the NoRC chromatin-remodeling complex) at least composed of SMARCA5/SNF2H and BAZ2A/TIP5; the complex suppresses rDNA transcription by a combination of nucleosome remodeling, histone deacetylation, and DNA methylation. Within the complex interacts with BAZ2A/TIP5. Within the complex interacts with HDAC1. Component of the BRF-5 ISWI chromatin-remodeling complex at least composed of SMARCA5/SNF2H and BAZ2B. Within the complex interacts with BAZ2B. Component of the NURF-5 ISWI chromatin-remodeling complex at least composed of SMARCA5/SNF2H and BPTF. Within the complex interacts with BPFT. Component of the CERF-5 ISWI chromatin-remodeling complex at least composed of SMARCA5/SNF2H and CECR2. LUZP1 is detected as part of the CERF-5 complex in embryonic stem cells where it is involved in complex stabilization but is not detected in the complex in the testis. Component of the RSF-5 ISWI chromatin-remodeling complex (also called the RSF complex) at least composed of SMARCA5/SNF2H and RSF1. Within the complex interacts with RSF1. Interacts with the cohesin complex component RAD21; the interaction is direct. Interacts with the NuRD complex components HDAC2, RBBP4 and CHD4; the interactions are direct. Interacts with PCNA. Component of the B-WICH complex, at least composed of SMARCA5/SNF2H, BAZ1B/WSTF, SF3B1, DEK, MYO1C, ERCC6, MYBBP1A and DDX21 which positively regulates RNA polymerase III transcription. Interacts with MYO1C. Interacts with BEND3. Interacts with SIRT6; promoting recruitment to DNA damage sites. As to expression, ubiquitously expressed.

It is found in the nucleus. It localises to the chromosome. It carries out the reaction ATP + H2O = ADP + phosphate + H(+). Functionally, ATPase that possesses intrinsic ATP-dependent nucleosome-remodeling activity. Catalytic subunit of ISWI chromatin-remodeling complexes, which form ordered nucleosome arrays on chromatin and facilitate access to DNA during DNA-templated processes such as DNA replication, transcription, and repair; this may require intact histone H4 tails. Within the ISWI chromatin-remodeling complexes, slides edge- and center-positioned histone octamers away from their original location on the DNA template. Catalytic activity and histone octamer sliding propensity is regulated and determined by components of the ISWI chromatin-remodeling complexes. The BAZ1A/ACF1-, BAZ1B/WSTF-, BAZ2A/TIP5- and BAZ2B-containing ISWI chromatin-remodeling complexes regulate the spacing of nucleosomes along the chromatin and have the ability to slide mononucleosomes to the center of a DNA template in an ATP-dependent manner. The CECR2- and RSF1-containing ISWI chromatin-remodeling complexes do not have the ability to slide mononucleosomes to the center of a DNA template. Binds to core histones together with RSF1, and is required for the assembly of regular nucleosome arrays by the RSF-5 ISWI chromatin-remodeling complex. Involved in DNA replication and together with BAZ1A/ACF1 is required for replication of pericentric heterochromatin in S-phase. Probably plays a role in repression of RNA polymerase I dependent transcription of the rDNA locus, through the recruitment of the SIN3/HDAC1 corepressor complex to the rDNA promoter. The WICH-5 ISWI chromatin-remodeling complex regulates the transcription of various genes, has a role in RNA polymerase I and RNA polymerase III transcription, mediates the histone H2AX phosphorylation at 'Tyr-142', and is involved in the maintenance of chromatin structures during DNA replication processes. Essential component of the NoRC-5 ISWI chromatin-remodeling complex, a complex that mediates silencing of a fraction of rDNA by recruiting histone-modifying enzymes and DNA methyltransferases, leading to heterochromatin formation and transcriptional silencing. Required for embryonic development and differentiation, and the proliferation of early blastocyst-derived stem cells. This is SWI/SNF-related matrix-associated actin-dependent regulator of chromatin subfamily A member 5 (Smarca5) from Mus musculus (Mouse).